The chain runs to 569 residues: ATP-dependent RNA helicase HAS1 (569 aa).

Disordered regions lie at residues 1 to 57 and 71 to 110; these read MSKG…DQNF and FKEE…FEDL. A compositionally biased stretch (acidic residues) spans 34-45; that stretch reads EEEISSDEEEAD. The span at 71-85 shows a compositional bias: basic and acidic residues; sequence FKEEKKQKKNKEPKT. The Q motif signature appears at 105 to 133; it reads DKFEDLGLSEPTMRAIKDMGFEKMTKVQE. The region spanning 136–312 is the Helicase ATP-binding domain; it reads IPPLLAGRDV…RISLRAGPLY (177 aa). An ATP-binding site is contributed by 149 to 156; the sequence is AKTGSGKT. The short motif at 259–262 is the DEAD box element; that stretch reads DEAD. Positions 326–496 constitute a Helicase C-terminal domain; sequence GLEQGYVTCD…NIQSQLTKLI (171 aa).

It belongs to the DEAD box helicase family. DDX18/HAS1 subfamily. Associates in the nucleolus with the 60S and pre-60S ribosomal subunits.

The protein localises to the nucleus. It is found in the nucleolus. The catalysed reaction is ATP + H2O = ADP + phosphate + H(+). Its function is as follows. ATP-dependent RNA helicase involved in 40S ribosomal subunit biogenesis. Required for the processing and cleavage of 35S pre-rRNA at sites A0, A1, and A2, leading to mature 18S rRNA. The sequence is that of ATP-dependent RNA helicase HAS1 (HAS1) from Meyerozyma guilliermondii (strain ATCC 6260 / CBS 566 / DSM 6381 / JCM 1539 / NBRC 10279 / NRRL Y-324) (Yeast).